We begin with the raw amino-acid sequence, 21 residues long: Cupiennin-6a (21 aa).

Ser-21 bears the Serine amide mark.

Expressed by the venom gland.

Its subcellular location is the secreted. The polypeptide is Cupiennin-6a (Cupiennius salei (American wandering spider)).